The sequence spans 318 residues: MWKYGQNQGNQGPSSGGGGGGGPNMMPMGGFGMQHGNMQQMHMSPQHQQQQQQMGMMGGPGSMQMNPQGPGGPGGLMPGMSPQHQMQQQQQQQMMQQQMMVPQQGVGVGVGMGGGVGMGGGGVVPQQQQQQPQQNMPQQNIPQQQQQLNPVAGIPPGGAGGSNNMLAISQQNPHKEINIVQLSRLGQETVQDIASRFQEVFASLKGIQPTSHRENSSEKKVQEYFRTIRLLFKRVRIIYEKCNDAGMDYMSAESLIPYRDEPEPRIEPSLCDEYRKVLQENHELIETVKLKNRQLREIIDRTRIIIWEINTMLAMRRS.

A compositionally biased stretch (low complexity) spans 1-13; the sequence is MWKYGQNQGNQGP. 2 disordered regions span residues 1–92 and 120–142; these read MWKY…QQQQ and GGGVVPQQQQQQPQQNMPQQNIP. Residues 14–33 show a composition bias toward gly residues; the sequence is SSGGGGGGGPNMMPMGGFGM. 3 stretches are compositionally biased toward low complexity: residues 34 to 55, 78 to 92, and 124 to 142; these read QHGNMQQMHMSPQHQQQQQQMG, PGMSPQHQMQQQQQQ, and VPQQQQQQPQQNMPQQNIP.

This sequence belongs to the Mediator complex subunit 30 family. Component of the Mediator complex, which includes at least CDK8, MED4, MED6, MED11, MED14, MED17, MED18, MED20, MED21, MED22, MED27, MED28, MED30 and MED31.

It localises to the nucleus. Its function is as follows. Component of the Mediator complex, a coactivator involved in the regulated transcription of nearly all RNA polymerase II-dependent genes. Mediator functions as a bridge to convey information from gene-specific regulatory proteins to the basal RNA polymerase II transcription machinery. Mediator is recruited to promoters by direct interactions with regulatory proteins and serves as a scaffold for the assembly of a functional preinitiation complex with RNA polymerase II and the general transcription factors. This is Mediator of RNA polymerase II transcription subunit 30 (MED30) from Drosophila melanogaster (Fruit fly).